Consider the following 197-residue polypeptide: Phosphoheptose isomerase (197 aa).

Residues 36 to 197 (MVNALLNEGK…IDSQLFGSEE (162 aa)) form the SIS domain. 51 to 53 (NGG) provides a ligand contact to substrate. Zn(2+)-binding residues include His-60 and Glu-64. Substrate contacts are provided by residues Glu-64, 93-94 (ND), 119-121 (STS), Ser-124, and Gln-174. Residues Gln-174 and His-182 each contribute to the Zn(2+) site.

Belongs to the SIS family. GmhA subfamily. Homotetramer. It depends on Zn(2+) as a cofactor.

The protein localises to the cytoplasm. The enzyme catalyses 2 D-sedoheptulose 7-phosphate = D-glycero-alpha-D-manno-heptose 7-phosphate + D-glycero-beta-D-manno-heptose 7-phosphate. It functions in the pathway carbohydrate biosynthesis; D-glycero-D-manno-heptose 7-phosphate biosynthesis; D-glycero-alpha-D-manno-heptose 7-phosphate and D-glycero-beta-D-manno-heptose 7-phosphate from sedoheptulose 7-phosphate: step 1/1. Its function is as follows. Catalyzes the isomerization of sedoheptulose 7-phosphate in D-glycero-D-manno-heptose 7-phosphate. The protein is Phosphoheptose isomerase of Pseudomonas syringae pv. syringae (strain B728a).